Reading from the N-terminus, the 383-residue chain is Succinyl-diaminopimelate desuccinylase (383 aa).

His-73 serves as a coordination point for Zn(2+). The active site involves Asp-75. Asp-107 contacts Zn(2+). The active-site Proton acceptor is Glu-141. Residues Glu-142, Glu-170, and His-356 each contribute to the Zn(2+) site.

The protein belongs to the peptidase M20A family. DapE subfamily. Homodimer. The cofactor is Zn(2+). It depends on Co(2+) as a cofactor.

It catalyses the reaction N-succinyl-(2S,6S)-2,6-diaminopimelate + H2O = (2S,6S)-2,6-diaminopimelate + succinate. Its pathway is amino-acid biosynthesis; L-lysine biosynthesis via DAP pathway; LL-2,6-diaminopimelate from (S)-tetrahydrodipicolinate (succinylase route): step 3/3. Functionally, catalyzes the hydrolysis of N-succinyl-L,L-diaminopimelic acid (SDAP), forming succinate and LL-2,6-diaminopimelate (DAP), an intermediate involved in the bacterial biosynthesis of lysine and meso-diaminopimelic acid, an essential component of bacterial cell walls. In Pseudomonas syringae pv. syringae (strain B728a), this protein is Succinyl-diaminopimelate desuccinylase.